We begin with the raw amino-acid sequence, 1053 residues long: Serine/threonine-protein phosphatase 6 regulatory ankyrin repeat subunit A (1053 aa).

ANK repeat units follow at residues 40–69, 73–102, 106–135, 139–168, 172–201, 205–234, 238–267, 271–301, 305–334, 338–367, 371–400, 404–433, 437–466, 470–500, 504–534, 549–578, 582–611, 616–645, 652–681, 685–714, 718–747, 755–786, 788–817, 822–851, 855–885, 889–918, and 925–954; these read EKRTPLHAAAYLGDAEIIELLILSGARVNA, KWLTPLHRAVASCSEEAVQILLKHSADVNA, NWQTPLHIAAANKAVKCAESLVPLLSNVNV, AGRTALHHAAFSGHGEMVKLLLSRGANINA, KDRRAIHWAAYMGHIEVVKLLVSHGAEVTC, KSYTPLHAAASSGMISVVKYLLDLGVDMNE, YGNTPLHVACYNGQDVVVNELIDCGANVNQ, KGFTPLHFAAASTHGALCLELLVGNGADVNM, DGKTPLHMTALHGRFSRSQTIIQSGAVIDC, NGNTPLHIAARYGHELLINTLITSGADTAK, HGMFPLHLAALSGFSDCCRKLLSSGFDIDT, FGRTCLHAAAAGGNLECLNLLLNTGADFNK, FGRSPLHYAAANCNYQCLFALVGSGASVND, RGCTPLHYAATSDTDGKCLEYLLRNDANPGI, QGYNAVHYSAAYGHRLCLQLIASETPLDVLM, ATISPLHLAAYHGHHQALEVLVQSLLDLDV, SGRTPLDLAAFKGHVECVDVLINQGASILV, LKRTPIHAAATNGHSECLRLLIGNAEPQNA, NGQTPLMLSVLNGHTDCVYSLLNKGANVDA, WGRTALHRGAVTGHEECVDALLQHGAKCLL, RGRTPIHLSAACGHIGVLGALLQSATSVDA, HGYTALHWACYNGHETCVELLLEQDVFQKIDG, AFSPLHCAVINDNEGAAEMLIDSLGASIVN, KGRTPLHAAAFTDHVECLQLLLSQNAQVNS, TGKTPLMMAAENGQTNTVEMLVSSASADLTL, SKNTALHLACGKGHETSALLILEKITDRNL, and ALQTPLHVAARNGLTMVVQELLGKGASVLA. Phosphoserine is present on residues S1007 and S1011.

As to quaternary structure, protein phosphatase 6 (PP6) holoenzyme is proposed to be a heterotrimeric complex formed by the catalytic subunit, a SAPS domain-containing subunit (PP6R) and an ankyrin repeat-domain containing regulatory subunit (ARS). Interacts with PPP1C and HNRPK. Interacts with PPP6C, PPP6R1 and PPP6R3. In terms of processing, ubiquitinated by the ECS(RAB40C) complex leading to its degradation and decreased PP6 activity. As to expression, widely expressed (at protein level).

It is found in the nucleus. Its subcellular location is the nucleoplasm. The protein resides in the cytoplasm. It localises to the cytosol. The protein localises to the cell projection. It is found in the lamellipodium. Functionally, putative regulatory subunit of protein phosphatase 6 (PP6) that may be involved in the recognition of phosphoprotein substrates. Involved in the PP6-mediated dephosphorylation of NFKBIE opposing its degradation in response to TNF-alpha. Selectively inhibits the phosphatase activity of PPP1C. Targets PPP1C to modulate HNRPK phosphorylation. Involved in the PP6-mediated dephosphorylation of MOB1 and induced focal adhesion assembly during cell migration. The sequence is that of Serine/threonine-protein phosphatase 6 regulatory ankyrin repeat subunit A (Ankrd28) from Mus musculus (Mouse).